The chain runs to 229 residues: 2-phytyl-1,4-naphtoquinone methyltransferase (229 aa).

Belongs to the class I-like SAM-binding methyltransferase superfamily. MenG/UbiE family.

The enzyme catalyses demethylphylloquinol + S-adenosyl-L-methionine = phylloquinol + S-adenosyl-L-homocysteine + H(+). It functions in the pathway cofactor biosynthesis; phylloquinone biosynthesis. Functionally, methyltransferase required for the conversion of 2-phytyl-1,4-beta-naphthoquinol to phylloquinol. This chain is 2-phytyl-1,4-naphtoquinone methyltransferase, found in Trichormus variabilis (strain ATCC 29413 / PCC 7937) (Anabaena variabilis).